The following is a 220-amino-acid chain: Probable nicotinate-nucleotide adenylyltransferase (220 aa).

This sequence belongs to the NadD family.

The enzyme catalyses nicotinate beta-D-ribonucleotide + ATP + H(+) = deamido-NAD(+) + diphosphate. Its pathway is cofactor biosynthesis; NAD(+) biosynthesis; deamido-NAD(+) from nicotinate D-ribonucleotide: step 1/1. Functionally, catalyzes the reversible adenylation of nicotinate mononucleotide (NaMN) to nicotinic acid adenine dinucleotide (NaAD). The chain is Probable nicotinate-nucleotide adenylyltransferase from Serratia proteamaculans (strain 568).